Consider the following 56-residue polypeptide: Large ribosomal subunit protein eL40 (56 aa).

It belongs to the eukaryotic ribosomal protein eL40 family.

The polypeptide is Large ribosomal subunit protein eL40 (Metallosphaera sedula (strain ATCC 51363 / DSM 5348 / JCM 9185 / NBRC 15509 / TH2)).